The sequence spans 57 residues: UPF0391 membrane protein Nwi_2359 (57 aa).

2 consecutive transmembrane segments (helical) span residues Trp-4–Ala-24 and Ile-30–Phe-50.

It belongs to the UPF0391 family.

The protein localises to the cell membrane. The polypeptide is UPF0391 membrane protein Nwi_2359 (Nitrobacter winogradskyi (strain ATCC 25391 / DSM 10237 / CIP 104748 / NCIMB 11846 / Nb-255)).